A 251-amino-acid polypeptide reads, in one-letter code: CDP-diacylglycerol pyrophosphatase (251 aa).

The chain crosses the membrane as a helical span at residues 4–24 (AGLLFLVMIVIAVVAAGIGYW).

Belongs to the Cdh family.

The protein resides in the cell inner membrane. The enzyme catalyses a CDP-1,2-diacyl-sn-glycerol + H2O = a 1,2-diacyl-sn-glycero-3-phosphate + CMP + 2 H(+). It participates in phospholipid metabolism; CDP-diacylglycerol degradation; phosphatidate from CDP-diacylglycerol: step 1/1. This chain is CDP-diacylglycerol pyrophosphatase, found in Shigella flexneri.